A 454-amino-acid chain; its full sequence is Nuclear distribution protein PAC1-1 (454 aa).

Residues 9-41 enclose the LisH domain; sequence QAEELHRALIAYLSSNNLTSTAAALRAEIGLGE. The disordered stretch occupies residues 71-93; that stretch reads RHTSQLSNATPTSRQNKDPVNWL. Polar residues predominate over residues 73 to 84; the sequence is TSQLSNATPTSR. WD repeat units follow at residues 104–145, 147–187, 191–236, 239–278, 283–342, 344–383, and 388–450; these read SHRQ…RTIK, HTKT…KNIR, GHDH…CVKT, GHAE…PEPK, GHEH…IKIL, GHDN…RCVK, and AHAH…LNVR.

It belongs to the WD repeat LIS1/nudF family. In terms of assembly, self-associates. Interacts with NDL1 and dynein.

It is found in the cytoplasm. The protein localises to the cytoskeleton. The protein resides in the spindle pole. Functionally, positively regulates the activity of the minus-end directed microtubule motor protein dynein. May enhance dynein-mediated microtubule sliding by targeting dynein to the microtubule plus end. Required for nuclear migration during vegetative growth as well as development. Required for retrograde early endosome (EE) transport from the hyphal tip. Required for localization of dynein to the mitotic spindle poles. Recruits additional proteins to the dynein complex at SPBs. The polypeptide is Nuclear distribution protein PAC1-1 (Chaetomium globosum (strain ATCC 6205 / CBS 148.51 / DSM 1962 / NBRC 6347 / NRRL 1970) (Soil fungus)).